Reading from the N-terminus, the 169-residue chain is MSYRKTVVSARRDQKKGRVGGLTEEQKQEIREAFDLFDTDGSGTIDAKELKVAMRALGFEPKKEEIKKMIADIDKAGSGTIDFEEFLQMMTSKMGERDSREEIIKAFKLFDDDNTGFITLKNLKRVAKELGENLTDEELQEMTDEADRNGDGQIDEDEFYRIMKKTSLF.

The disordered stretch occupies residues 1–24; that stretch reads MSYRKTVVSARRDQKKGRVGGLTE. 4 EF-hand domains span residues 25–60, 61–96, 98–133, and 134–169; these read EQKQ…LGFE, PKKE…KMGE, DSRE…LGEN, and LTDE…TSLF. 5 residues coordinate Ca(2+): aspartate 38, aspartate 40, serine 42, threonine 44, and glutamate 49. Residues aspartate 147, asparagine 149, aspartate 151, glutamine 153, and glutamate 158 each coordinate Ca(2+).

The protein belongs to the centrin family.

Its function is as follows. This calcium-binding protein is found in the basal body complexes (the functional homolog of the centrosome in animal cell). In mitotic cells it is specifically associated with the poles of the mitotic spindles at the sites of the duplicated basal body complexes. This chain is Caltractin, found in Dunaliella salina (Green alga).